A 104-amino-acid chain; its full sequence is Chromogranin-A (104 aa).

Cysteine 17 and cysteine 38 are oxidised to a cystine.

Belongs to the chromogranin/secretogranin protein family. As to quaternary structure, dimer.

The protein resides in the cytoplasmic vesicle. The protein localises to the secretory vesicle. It is found in the secreted. Functionally, chromogranin A probably has a paracrine role in the regulation of secretion or maturation. This is Chromogranin-A (CHGA) from Struthio camelus (Common ostrich).